A 389-amino-acid polypeptide reads, in one-letter code: Serpin-Z3 (389 aa).

The segment at 337-361 (GTEAAAVSVAIMMPQCLMRNPDFVA) is RCL.

This sequence belongs to the serpin family.

Its function is as follows. Probable serine protease inhibitor. This chain is Serpin-Z3, found in Arabidopsis thaliana (Mouse-ear cress).